The chain runs to 274 residues: Diaminopimelate epimerase (274 aa).

Residues N11, Q44, and N64 each coordinate substrate. The Proton donor role is filled by C73. Substrate-binding positions include 74-75 (GN), N157, N190, and 208-209 (ER). Residue C217 is the Proton acceptor of the active site. Substrate is bound at residue 218-219 (GS).

It belongs to the diaminopimelate epimerase family. As to quaternary structure, homodimer.

It is found in the cytoplasm. It carries out the reaction (2S,6S)-2,6-diaminopimelate = meso-2,6-diaminopimelate. It functions in the pathway amino-acid biosynthesis; L-lysine biosynthesis via DAP pathway; DL-2,6-diaminopimelate from LL-2,6-diaminopimelate: step 1/1. Functionally, catalyzes the stereoinversion of LL-2,6-diaminopimelate (L,L-DAP) to meso-diaminopimelate (meso-DAP), a precursor of L-lysine and an essential component of the bacterial peptidoglycan. The chain is Diaminopimelate epimerase from Mannheimia succiniciproducens (strain KCTC 0769BP / MBEL55E).